Here is a 309-residue protein sequence, read N- to C-terminus: tRNA pseudouridine synthase B (309 aa).

The active-site Nucleophile is the D51.

Belongs to the pseudouridine synthase TruB family. Type 1 subfamily.

It carries out the reaction uridine(55) in tRNA = pseudouridine(55) in tRNA. Responsible for synthesis of pseudouridine from uracil-55 in the psi GC loop of transfer RNAs. This is tRNA pseudouridine synthase B from Coxiella burnetii (strain RSA 493 / Nine Mile phase I).